Consider the following 796-residue polypeptide: Protein translocase subunit SecA 2 (796 aa).

ATP-binding positions include Q84, 102–106 (GEGKT), and D496.

It belongs to the SecA family. In terms of assembly, monomer and homodimer. Part of the essential Sec protein translocation apparatus which comprises SecA, SecYEG and auxiliary proteins SecDF. Other proteins may also be involved.

The protein localises to the cell membrane. It localises to the cytoplasm. The enzyme catalyses ATP + H2O + cellular proteinSide 1 = ADP + phosphate + cellular proteinSide 2.. Functionally, part of the Sec protein translocase complex. Interacts with the SecYEG preprotein conducting channel. Has a central role in coupling the hydrolysis of ATP to the transfer of proteins into and across the cell membrane, serving as an ATP-driven molecular motor driving the stepwise translocation of polypeptide chains across the membrane. The polypeptide is Protein translocase subunit SecA 2 (Staphylococcus aureus (strain MSSA476)).